Here is a 221-residue protein sequence, read N- to C-terminus: Leucine rich adaptor protein 1-like (221 aa).

Position 1 is an N-acetylmethionine (Met-1). Positions 24–81 (LARSLRGEELAPREGAADPSGVGGSCSSSSSCSSFAPSVSSSSSSSPASGSPRRSHPS) are disordered. A compositionally biased stretch (basic and acidic residues) spans 28–39 (LRGEELAPREGA). Positions 48–75 (SCSSSSSCSSFAPSVSSSSSSSPASGSP) are enriched in low complexity.

This chain is Leucine rich adaptor protein 1-like (Lurap1l), found in Mus musculus (Mouse).